The sequence spans 102 residues: Integration host factor subunit alpha (102 aa).

This sequence belongs to the bacterial histone-like protein family. As to quaternary structure, heterodimer of an alpha and a beta chain.

In terms of biological role, this protein is one of the two subunits of integration host factor, a specific DNA-binding protein that functions in genetic recombination as well as in transcriptional and translational control. This is Integration host factor subunit alpha from Albidiferax ferrireducens (strain ATCC BAA-621 / DSM 15236 / T118) (Rhodoferax ferrireducens).